Consider the following 251-residue polypeptide: Cell division protein ZapD (251 aa).

The protein belongs to the ZapD family. Interacts with FtsZ.

The protein localises to the cytoplasm. Cell division factor that enhances FtsZ-ring assembly. Directly interacts with FtsZ and promotes bundling of FtsZ protofilaments, with a reduction in FtsZ GTPase activity. This is Cell division protein ZapD from Janthinobacterium sp. (strain Marseille) (Minibacterium massiliensis).